We begin with the raw amino-acid sequence, 105 residues long: Protein RALF-like 21 (105 aa).

The first 30 residues, 1 to 30 (MSNMKITNRFMLVATFIACVFISSMNMTVG), serve as a signal peptide directing secretion. 2 disulfide bridges follow: Cys44–Cys53 and Cys67–Cys73.

Belongs to the plant rapid alkalinization factor (RALF) family. As to expression, expressed in seeds and rosettes.

It localises to the secreted. Functionally, cell signaling peptide that may regulate plant stress, growth, and development. Mediates a rapid alkalinization of extracellular space by mediating a transient increase in the cytoplasmic Ca(2+) concentration leading to a calcium-dependent signaling events through a cell surface receptor and a concomitant activation of some intracellular mitogen-activated protein kinases. This Arabidopsis thaliana (Mouse-ear cress) protein is Protein RALF-like 21 (RALFL21).